The primary structure comprises 51 residues: Large ribosomal subunit protein eL40 (51 aa).

Zn(2+) is bound by residues C17, C20, C31, and C34.

Belongs to the eukaryotic ribosomal protein eL40 family. As to quaternary structure, part of the 50S ribosomal subunit. Requires Zn(2+) as cofactor.

The protein is Large ribosomal subunit protein eL40 of Thermococcus kodakarensis (strain ATCC BAA-918 / JCM 12380 / KOD1) (Pyrococcus kodakaraensis (strain KOD1)).